Here is a 279-residue protein sequence, read N- to C-terminus: uncharacterized protein (279 aa).

A signal peptide spans 1–31 (MLVQSRTLVTAILSCSLVFGTTVNGASVAIA).

This is an uncharacterized protein from Corynebacterium glutamicum (strain ATCC 13032 / DSM 20300 / JCM 1318 / BCRC 11384 / CCUG 27702 / LMG 3730 / NBRC 12168 / NCIMB 10025 / NRRL B-2784 / 534).